The primary structure comprises 404 residues: UPF0261 protein CTC_01794 (404 aa).

This sequence belongs to the UPF0261 family.

The sequence is that of UPF0261 protein CTC_01794 from Clostridium tetani (strain Massachusetts / E88).